The primary structure comprises 252 residues: Hydroxyacylglutathione hydrolase (252 aa).

Zn(2+)-binding residues include histidine 54, histidine 56, aspartate 58, histidine 59, histidine 111, aspartate 128, and histidine 166.

Belongs to the metallo-beta-lactamase superfamily. Glyoxalase II family. In terms of assembly, monomer. Zn(2+) is required as a cofactor.

It carries out the reaction an S-(2-hydroxyacyl)glutathione + H2O = a 2-hydroxy carboxylate + glutathione + H(+). It participates in secondary metabolite metabolism; methylglyoxal degradation; (R)-lactate from methylglyoxal: step 2/2. Its function is as follows. Thiolesterase that catalyzes the hydrolysis of S-D-lactoyl-glutathione to form glutathione and D-lactic acid. In Vibrio campbellii (strain ATCC BAA-1116), this protein is Hydroxyacylglutathione hydrolase.